Consider the following 265-residue polypeptide: 3-methyl-2-oxobutanoate hydroxymethyltransferase (265 aa).

Mg(2+) is bound by residues D46 and D85. 3-methyl-2-oxobutanoate-binding positions include 46–47 (DS), D85, and K114. Mg(2+) is bound at residue E116. The active-site Proton acceptor is the E183.

The protein belongs to the PanB family. Homodecamer; pentamer of dimers. Requires Mg(2+) as cofactor.

Its subcellular location is the cytoplasm. The enzyme catalyses 3-methyl-2-oxobutanoate + (6R)-5,10-methylene-5,6,7,8-tetrahydrofolate + H2O = 2-dehydropantoate + (6S)-5,6,7,8-tetrahydrofolate. It participates in cofactor biosynthesis; coenzyme A biosynthesis. Its function is as follows. Catalyzes the reversible reaction in which hydroxymethyl group from 5,10-methylenetetrahydrofolate is transferred onto alpha-ketoisovalerate to form ketopantoate. The protein is 3-methyl-2-oxobutanoate hydroxymethyltransferase of Pyrobaculum calidifontis (strain DSM 21063 / JCM 11548 / VA1).